The following is a 298-amino-acid chain: Glutamyl-Q tRNA(Asp) synthetase (298 aa).

L-glutamate is bound by residues 9–13 and glutamate 45; that span reads RFAPS. A 'HIGH' region motif is present at residues 12–22; it reads PSPSGELHFGS. Zn(2+) is bound by residues cysteine 101, cysteine 103, tyrosine 115, and cysteine 119. The L-glutamate site is built by tyrosine 172 and arginine 190. A 'KMSKS' region motif is present at residues 228-232; it reads KLSKQ. Lysine 231 serves as a coordination point for ATP.

The protein belongs to the class-I aminoacyl-tRNA synthetase family. GluQ subfamily. Zn(2+) is required as a cofactor.

Catalyzes the tRNA-independent activation of glutamate in presence of ATP and the subsequent transfer of glutamate onto a tRNA(Asp). Glutamate is transferred on the 2-amino-5-(4,5-dihydroxy-2-cyclopenten-1-yl) moiety of the queuosine in the wobble position of the QUC anticodon. The sequence is that of Glutamyl-Q tRNA(Asp) synthetase from Salmonella typhi.